Here is a 100-residue protein sequence, read N- to C-terminus: NADH-quinone oxidoreductase subunit K (100 aa).

The next 3 membrane-spanning stretches (helical) occupy residues 1 to 21 (MIGL…GLAG), 28 to 48 (ILLL…GFVA), and 64 to 84 (FIIA…ILWF).

The protein belongs to the complex I subunit 4L family. NDH-1 is composed of 14 different subunits. Subunits NuoA, H, J, K, L, M, N constitute the membrane sector of the complex.

The protein resides in the cell inner membrane. It carries out the reaction a quinone + NADH + 5 H(+)(in) = a quinol + NAD(+) + 4 H(+)(out). NDH-1 shuttles electrons from NADH, via FMN and iron-sulfur (Fe-S) centers, to quinones in the respiratory chain. The immediate electron acceptor for the enzyme in this species is believed to be ubiquinone. Couples the redox reaction to proton translocation (for every two electrons transferred, four hydrogen ions are translocated across the cytoplasmic membrane), and thus conserves the redox energy in a proton gradient. The protein is NADH-quinone oxidoreductase subunit K of Helicobacter pylori (strain P12).